The following is a 73-amino-acid chain: Putative antitoxin M1627_0365 (73 aa).

It belongs to the UPF0330 family.

Possibly the antitoxin component of a type II toxin-antitoxin (TA) system. This chain is Putative antitoxin M1627_0365, found in Saccharolobus islandicus (strain M.16.27) (Sulfolobus islandicus).